A 314-amino-acid polypeptide reads, in one-letter code: uncharacterized protein (314 aa).

Positions 1 to 18 (MLIQILFLIILTLNCSYS) are cleaved as a signal peptide. N68, N72, N106, and N256 each carry an N-linked (GlcNAc...) asparagine glycan.

It localises to the secreted. This is an uncharacterized protein from Caenorhabditis elegans.